The chain runs to 619 residues: Putative transcription activator BRLF1 homolog (619 aa).

2 disordered regions span residues 301–389 (LRDS…ETQS) and 563–603 (GLVS…SDEM). Low complexity-rich tracts occupy residues 371 to 389 (EAPQ…ETQS) and 567 to 582 (QQQA…GGPP). Over residues 589–598 (QEQQQSSTDP) the composition is skewed to polar residues.

The protein belongs to the herpesviridae TAF50 family.

Functionally, transcription activation. The polypeptide is Putative transcription activator BRLF1 homolog (50) (Connochaetes taurinus (Blue wildebeest)).